A 505-amino-acid chain; its full sequence is Ribose import ATP-binding protein RbsA 2 (505 aa).

ABC transporter domains lie at 13-249 (LALE…VGRD) and 259-503 (VRAG…TGRA). 45–52 (GENGAGKS) provides a ligand contact to ATP.

Belongs to the ABC transporter superfamily. Ribose importer (TC 3.A.1.2.1) family. As to quaternary structure, the complex is composed of an ATP-binding protein (RbsA), two transmembrane proteins (RbsC) and a solute-binding protein (RbsB).

Its subcellular location is the cell membrane. The enzyme catalyses D-ribose(out) + ATP + H2O = D-ribose(in) + ADP + phosphate + H(+). Its function is as follows. Part of the ABC transporter complex RbsABC involved in ribose import. Responsible for energy coupling to the transport system. This Streptomyces avermitilis (strain ATCC 31267 / DSM 46492 / JCM 5070 / NBRC 14893 / NCIMB 12804 / NRRL 8165 / MA-4680) protein is Ribose import ATP-binding protein RbsA 2.